Consider the following 222-residue polypeptide: Adenylate kinase, chloroplastic (222 aa).

Ala15–Thr20 is a binding site for ATP. Residues Ser35–Val64 are NMP. AMP contacts are provided by residues Arg41, Gln62–Val64, Gly91–Arg94, and Gln98. The interval Gly128 to Asp161 is LID. Arg129 is a binding site for ATP. An AMP-binding site is contributed by Arg158. An ATP-binding site is contributed by Ala195.

As to quaternary structure, monomer.

Its subcellular location is the plastid. The protein resides in the chloroplast. The catalysed reaction is AMP + ATP = 2 ADP. Catalyzes the reversible transfer of the terminal phosphate group between ATP and AMP. Plays an important role in cellular energy homeostasis and in adenine nucleotide metabolism. The maize enzyme also works with CMP, albeit with 10% of the activity with AMP. The sequence is that of Adenylate kinase, chloroplastic (ADK1) from Zea mays (Maize).